The primary structure comprises 359 residues: WAT1-related protein At5g64700 (359 aa).

10 helical membrane passes run 10 to 30, 37 to 57, 66 to 86, 100 to 120, 135 to 155, 186 to 206, 218 to 238, 256 to 276, 282 to 302, and 306 to 326; these read LMVT…KAVF, FVFV…LAFF, LSFV…TLSL, LAAA…LLFG, LVGI…KGPL, WLKG…WLVL, LYFT…IAIA, AVIY…SWVI, VFLS…SAIL, and IISL…YCVL. EamA domains lie at 18–136 and 198–326; these read IYTI…AKLV and ILWG…YCVL.

This sequence belongs to the drug/metabolite transporter (DMT) superfamily. Plant drug/metabolite exporter (P-DME) (TC 2.A.7.4) family.

It localises to the membrane. In Arabidopsis thaliana (Mouse-ear cress), this protein is WAT1-related protein At5g64700.